The chain runs to 311 residues: MKHLTGLCNCSAATIATLLELASDYKKELLKSNPQFQPTLCNKRIALVFFENSTRTRFSFELAARHLGASTLNFAAAASSVSKGETLSDTIKNLEAMQVDGFVLRHPSSGAANFITTITSRPVVNAGDGANEHPTQALLDLFTLQEHFGRLKGIRIIIIGDVLHSRVARSNIYGLLSVGAEVGLCSPVTLMPPDADQLGITMFTNLEDALAWADAAMVLRLQLERAAGGYLPSLEEYSVYYGLTDERLDRIQKNLLVLHPGPINREIEISNNVADRIQPPGYSKSMLLEQVTNGVAVRMAVLHTLLAENGK.

Residues arginine 55 and threonine 56 each contribute to the carbamoyl phosphate site. Lysine 83 contributes to the L-aspartate binding site. Residues arginine 105, histidine 133, and glutamine 136 each contribute to the carbamoyl phosphate site. L-aspartate is bound by residues arginine 166 and arginine 220. Carbamoyl phosphate is bound by residues glycine 261 and proline 262.

This sequence belongs to the aspartate/ornithine carbamoyltransferase superfamily. ATCase family. Heterododecamer (2C3:3R2) of six catalytic PyrB chains organized as two trimers (C3), and six regulatory PyrI chains organized as three dimers (R2).

It carries out the reaction carbamoyl phosphate + L-aspartate = N-carbamoyl-L-aspartate + phosphate + H(+). It functions in the pathway pyrimidine metabolism; UMP biosynthesis via de novo pathway; (S)-dihydroorotate from bicarbonate: step 2/3. Its function is as follows. Catalyzes the condensation of carbamoyl phosphate and aspartate to form carbamoyl aspartate and inorganic phosphate, the committed step in the de novo pyrimidine nucleotide biosynthesis pathway. This Chlorobium chlorochromatii (strain CaD3) protein is Aspartate carbamoyltransferase catalytic subunit.